A 237-amino-acid chain; its full sequence is Probable Bax inhibitor 1 (237 aa).

At 1-29 the chain is on the cytoplasmic side; that stretch reads MNVFDRNINFDSLFKFSQISHSTQVHLKN. The chain crosses the membrane as a helical span at residues 30 to 50; that stretch reads VYSSLAVCMFVAAAGSYVHVV. Residues 51–52 lie on the Lumenal side of the membrane; sequence TR. A helical transmembrane segment spans residues 53–73; sequence LFQGGMLSVLGSLGMMFWLAM. The Cytoplasmic segment spans residues 74-86; the sequence is TPHNSETEKKRLA. Residues 87 to 107 form a helical membrane-spanning segment; sequence ILAGFAFLTGVGLCPTLDFVI. Topologically, residues 108-112 are lumenal; the sequence is AINPS. A helical transmembrane segment spans residues 113 to 133; it reads IIVTAFLGTSVIFVCFTLSAL. Residues 134–139 lie on the Cytoplasmic side of the membrane; the sequence is YAKRRS. Residues 140–160 form a helical membrane-spanning segment; that stretch reads YLFLGGTLMSGLSILFLMSMM. At 161-166 the chain is on the lumenal side; it reads NMFFGS. Residues 167-187 traverse the membrane as a helical segment; the sequence is VMLFKAHMYLGLLIMCGFVLX. Residues 188 to 206 lie on the Cytoplasmic side of the membrane; sequence DTQLIIEKAENGDKDYVWH. The segment at residues 207–227 is an intramembrane region (helical); sequence SVDLFLDFITIFRKLMVILAL. Over 228–237 the chain is Cytoplasmic; sequence NDKDKKKEKK.

Belongs to the BI1 family. In terms of tissue distribution, highly abundant in testis.

The protein localises to the endoplasmic reticulum membrane. Functionally, suppressor of apoptosis. Modulates unfolded protein response signaling. Modulate ER calcium homeostasis by acting as a calcium-leak channel. This is Probable Bax inhibitor 1 (tmbim6) from Paralichthys olivaceus (Bastard halibut).